Consider the following 285-residue polypeptide: 2-dehydro-3-deoxyphosphooctonate aldolase (285 aa).

It belongs to the KdsA family.

The protein localises to the cytoplasm. The enzyme catalyses D-arabinose 5-phosphate + phosphoenolpyruvate + H2O = 3-deoxy-alpha-D-manno-2-octulosonate-8-phosphate + phosphate. It functions in the pathway carbohydrate biosynthesis; 3-deoxy-D-manno-octulosonate biosynthesis; 3-deoxy-D-manno-octulosonate from D-ribulose 5-phosphate: step 2/3. It participates in bacterial outer membrane biogenesis; lipopolysaccharide biosynthesis. This Delftia acidovorans (strain DSM 14801 / SPH-1) protein is 2-dehydro-3-deoxyphosphooctonate aldolase.